The chain runs to 252 residues: Major prion protein (252 aa).

The signal sequence occupies residues 1-22; it reads MANLGCWMLFLFVATWSDLGLC. The interaction with ADGRG6 stretch occupies residues 23 to 38; that stretch reads KKRPKPGGWNTGGSRY. The segment at 23 to 229 is interaction with GRB2, ERI3 and SYN1; the sequence is KKRPKPGGWN…ESQAYYQRGS (207 aa). The segment at 26–106 is disordered; sequence PKPGGWNTGG…QWNKPSKPKT (81 aa). 5 tandem repeats follow at residues 51-58, 59-66, 67-74, 75-82, and 83-90. The 5 X 8 AA tandem repeats of P-H-G-G-G-W-G-Q stretch occupies residues 51–90; that stretch reads PQGGGWGQPHGGGWGQPHGGGWGQPHGGGWGQPHGGGWGQ. Positions 52–94 are enriched in gly residues; that stretch reads QGGGWGQPHGGGWGQPHGGGWGQPHGGGWGQPHGGGWGQGGGT. His-60, Gly-61, Gly-62, His-68, Gly-69, Gly-70, His-76, Gly-77, Gly-78, His-84, Gly-85, and Gly-86 together coordinate Cu(2+). Cys-178 and Cys-213 are oxidised to a cystine. 2 N-linked (GlcNAc...) asparagine glycosylation sites follow: Asn-180 and Asn-196. The GPI-anchor amidated serine moiety is linked to residue Ser-229. A propeptide spans 230-252 (removed in mature form); sequence SMVLFSSPPVILLISFLIFLIVG.

This sequence belongs to the prion family. Monomer and homodimer. Has a tendency to aggregate into amyloid fibrils containing a cross-beta spine, formed by a steric zipper of superposed beta-strands. Soluble oligomers may represent an intermediate stage on the path to fibril formation. Copper binding may promote oligomerization. Interacts with GRB2, APP, ERI3/PRNPIP and SYN1. Mislocalized cytosolically exposed PrP interacts with MGRN1; this interaction alters MGRN1 subcellular location and causes lysosomal enlargement. Interacts with APP. Interacts with KIAA1191. Interacts with ADGRG6.

It is found in the cell membrane. It localises to the golgi apparatus. Its function is as follows. Its primary physiological function is unclear. May play a role in neuronal development and synaptic plasticity. May be required for neuronal myelin sheath maintenance. May promote myelin homeostasis through acting as an agonist for ADGRG6 receptor. May play a role in iron uptake and iron homeostasis. Soluble oligomers are toxic to cultured neuroblastoma cells and induce apoptosis (in vitro). Association with GPC1 (via its heparan sulfate chains) targets PRNP to lipid rafts. Also provides Cu(2+) or Zn(2+) for the ascorbate-mediated GPC1 deaminase degradation of its heparan sulfate side chains. The polypeptide is Major prion protein (PRNP) (Callithrix jacchus (White-tufted-ear marmoset)).